The sequence spans 655 residues: SRSF protein kinase 1 (655 aa).

Positions 1–57 (MERKVLALQARKKRTKAKKDKAQRKPETQHRGSAPHSESDLPEQEEEILGSDDDEQE) are disordered. The segment covering 10–22 (ARKKRTKAKKDKA) has biased composition (basic residues). Positions 40–57 (DLPEQEEEILGSDDDEQE) are enriched in acidic residues. At S51 the chain carries Phosphoserine; by CK2. In terms of domain architecture, Protein kinase spans 80 to 653 (YHVIRKLGWG…AAECLRHPWL (574 aa)). Residues 86-94 (LGWGHFSTV) and K109 contribute to the ATP site. The Proton acceptor role is filled by D213. Disordered stretches follow at residues 238–341 (WQRS…QDQT) and 397–417 (FLSSQNGDSSTSQETDSCTPI). The segment covering 265–276 (KNKKKKLKKKQK) has biased composition (basic residues). Composition is skewed to basic and acidic residues over residues 277-288 (RQAELLEKRMQE) and 304-318 (NKQEESESPVERPLK). 3 positions are modified to phosphoserine: S309, S311, and S333. S555 carries the phosphoserine; by CK2 modification.

Belongs to the protein kinase superfamily. CMGC Ser/Thr protein kinase family. Monomer. Found in a multisubunit complex containing seven proteins, named toposome, which separates entangled circular chromatin DNA during chromosome segregation. Interacts with HHV-1 ICP27 protein. Interacts with DNAJC8 and AHSA1/AHA1 and this mediates formation of a complex with the Hsp70 /Hsp90 machinery. Binds to IGF2BP1, SYNCRIP, HNRNPA2B1 and HNRNPC. Interacts with SAFB/SAFB1 and SAFB2 which inhibits its activity. Mg(2+) serves as cofactor.

It is found in the cytoplasm. The protein resides in the nucleus. Its subcellular location is the nucleoplasm. The protein localises to the nucleus matrix. It localises to the microsome. It is found in the nucleus speckle. The protein resides in the chromosome. It carries out the reaction L-seryl-[protein] + ATP = O-phospho-L-seryl-[protein] + ADP + H(+). The catalysed reaction is L-threonyl-[protein] + ATP = O-phospho-L-threonyl-[protein] + ADP + H(+). Activated by phosphorylation on Ser-51 and Ser-555. Its function is as follows. Serine/arginine-rich protein-specific kinase which specifically phosphorylates its substrates at serine residues located in regions rich in arginine/serine dipeptides, known as RS domains and is involved in the phosphorylation of SR splicing factors and the regulation of splicing. Plays a central role in the regulatory network for splicing, controlling the intranuclear distribution of splicing factors in interphase cells and the reorganization of nuclear speckles during mitosis. Can influence additional steps of mRNA maturation, as well as other cellular activities, such as chromatin reorganization in somatic and sperm cells and cell cycle progression. Phosphorylates SFRS2, ZRSR2, LBR and PRM1. Phosphorylates SRSF1 using a directional (C-terminal to N-terminal) and a dual-track mechanism incorporating both processive phosphorylation (in which the kinase stays attached to the substrate after each round of phosphorylation) and distributive phosphorylation steps (in which the kinase and substrate dissociate after each phosphorylation event). The RS domain of SRSF1 binds first to a docking groove in the large lobe of the kinase domain of SRPK1. This induces certain structural changes in SRPK1 and/or RRM2 domain of SRSF1, allowing RRM2 to bind the kinase and initiate phosphorylation. The cycles continue for several phosphorylation steps in a processive manner (steps 1-8) until the last few phosphorylation steps (approximately steps 9-12). During that time, a mechanical stress induces the unfolding of the beta-4 motif in RRM2, which then docks at the docking groove of SRPK1. This also signals RRM2 to begin to dissociate, which facilitates SRSF1 dissociation after phosphorylation is completed. Can mediate hepatitis B virus (HBV) core protein phosphorylation. It plays a negative role in the regulation of HBV replication through a mechanism not involving the phosphorylation of the core protein but by reducing the packaging efficiency of the pregenomic RNA (pgRNA) without affecting the formation of the viral core particles. Can induce splicing of exon 10 in MAPT/TAU. The chain is SRSF protein kinase 1 from Pongo abelii (Sumatran orangutan).